The sequence spans 346 residues: Patr class I histocompatibility antigen, CH28 alpha chain (346 aa).

A signal peptide spans 1–21 (MAPRSLLLLFSGALALTETWA). The alpha-1 stretch occupies residues 22 to 111 (GSHSLRYFST…LLRRYNQSEA (90 aa)). Residues 22–305 (GSHSLRYFST…EQSPQPTIPI (284 aa)) lie on the Extracellular side of the membrane. The N-linked (GlcNAc...) asparagine glycan is linked to Asn-107. The alpha-2 stretch occupies residues 112 to 203 (GSHTLQGMNG…ENGKETLQRA (92 aa)). 2 cysteine pairs are disulfide-bonded: Cys-122–Cys-185 and Cys-224–Cys-280. Positions 204–295 (DPPKAHIAHH…GLPQPLTLRW (92 aa)) are alpha-3. One can recognise an Ig-like C1-type domain in the interval 206 to 294 (PKAHIAHHPI…EGLPQPLTLR (89 aa)). Residues 296 to 305 (EQSPQPTIPI) form a connecting peptide region. A helical transmembrane segment spans residues 306-329 (VGIVAGLVVLGAVVTGAVVAAVMW). Topologically, residues 330-346 (RKKSSDRNRGSYSQAAV) are cytoplasmic.

It belongs to the MHC class I family. Heterodimer of an alpha chain and a beta chain (beta-2-microglobulin).

Its subcellular location is the membrane. Its function is as follows. Involved in the presentation of foreign antigens to the immune system. This chain is Patr class I histocompatibility antigen, CH28 alpha chain, found in Pan troglodytes (Chimpanzee).